Reading from the N-terminus, the 339-residue chain is Ketol-acid reductoisomerase (NADP(+)) (339 aa).

The region spanning 1-182 (MRVYYDRDAD…GGGRAGIIET (182 aa)) is the KARI N-terminal Rossmann domain. Residues 24-27 (YGSQ), Arg48, Ser51, Ser53, and 83-86 (DELQ) contribute to the NADP(+) site. His108 is a catalytic residue. Gly134 is an NADP(+) binding site. The 146-residue stretch at 183 to 328 (TFKEECETDL…EKLREMMPWI (146 aa)) folds into the KARI C-terminal knotted domain. Mg(2+) is bound by residues Asp191, Glu195, Glu227, and Glu231. Ser252 contributes to the substrate binding site.

The protein belongs to the ketol-acid reductoisomerase family. It depends on Mg(2+) as a cofactor.

The enzyme catalyses (2R)-2,3-dihydroxy-3-methylbutanoate + NADP(+) = (2S)-2-acetolactate + NADPH + H(+). It catalyses the reaction (2R,3R)-2,3-dihydroxy-3-methylpentanoate + NADP(+) = (S)-2-ethyl-2-hydroxy-3-oxobutanoate + NADPH + H(+). It participates in amino-acid biosynthesis; L-isoleucine biosynthesis; L-isoleucine from 2-oxobutanoate: step 2/4. It functions in the pathway amino-acid biosynthesis; L-valine biosynthesis; L-valine from pyruvate: step 2/4. Involved in the biosynthesis of branched-chain amino acids (BCAA). Catalyzes an alkyl-migration followed by a ketol-acid reduction of (S)-2-acetolactate (S2AL) to yield (R)-2,3-dihydroxy-isovalerate. In the isomerase reaction, S2AL is rearranged via a Mg-dependent methyl migration to produce 3-hydroxy-3-methyl-2-ketobutyrate (HMKB). In the reductase reaction, this 2-ketoacid undergoes a metal-dependent reduction by NADPH to yield (R)-2,3-dihydroxy-isovalerate. The protein is Ketol-acid reductoisomerase (NADP(+)) of Azorhizobium caulinodans (strain ATCC 43989 / DSM 5975 / JCM 20966 / LMG 6465 / NBRC 14845 / NCIMB 13405 / ORS 571).